A 310-amino-acid chain; its full sequence is Altered inheritance of mitochondria protein 46, mitochondrial (310 aa).

Residues 1 to 20 constitute a mitochondrion transit peptide; it reads MRLISKVLVKTNCLEVGMRR.

It belongs to the AIM18/AIM46 family.

It is found in the mitochondrion. This chain is Altered inheritance of mitochondria protein 46, mitochondrial (AIM46), found in Saccharomyces cerevisiae (strain YJM789) (Baker's yeast).